The sequence spans 359 residues: Replication-associated protein (359 aa).

The CRESS-DNA virus Rep endonuclease domain occupies 18-121; sequence RHRNANTFLT…PKDKWEKGTY (104 aa). An RCR-1 motif is present at residues 25-28; it reads FLTY. Positions 59, 67, and 69 each coordinate a divalent metal cation. Residues 67–69 carry the RCR-2 motif; it reads HCH. Tyr107 (for DNA cleavage activity) is an active-site residue. The RCR-3 motif lies at 107–110; sequence YILK. Asp111 contacts a divalent metal cation. The interval 181–193 is oligomerization; the sequence is SASRLFPDIAEPY. 235 to 242 contacts ATP; sequence GPTRTGKT. Residues 258–276 are transactivation; sequence IDWSSYDEEAQYNVVDDIP. The Nuclear localization signal motif lies at 298-309; sequence KYGKRRKVASKS.

It belongs to the geminiviridae Rep protein family. In terms of assembly, homooligomer. Rep binds to repeated DNA motifs (iterons). Forms the O-complex, which is a Rep-DNA complex involved in the initiation of RCR. Part of the C- and V-complexes which are RepA-Rep-DNA complexes involved in the c-sense and v-sense transcription. The cofactor is Mg(2+). It depends on Mn(2+) as a cofactor.

It localises to the host nucleus. Its function is as follows. Essential for the replication of viral ssDNA. The closed circular ssDNA genome is first converted to a superhelical dsDNA. Rep binds a specific region at the genome origin of replication. It introduces an endonucleolytic nick within the conserved sequence 5'-TAATATTAC-3' in the intergenic region of the genome present in all geminiviruses, thereby initiating the rolling circle replication (RCR). Following cleavage, binds covalently to the 5'-phosphate of DNA as a tyrosyl ester. The cleavage gives rise to a free 3'-OH that serves as a primer for the cellular DNA polymerase. The polymerase synthesizes the (+) strand DNA by rolling circle mechanism. After one round of replication, a Rep-catalyzed nucleotidyl transfer reaction releases a circular single-stranded virus genome, thereby terminating the replication. Displays origin-specific DNA cleavage, nucleotidyl transferase, ATPase and helicase activities. Acts as an inhibitor of C-sense gene transcription. The protein is Replication-associated protein of Megathyrsus maximus (PanSV).